The primary structure comprises 1335 residues: Probable serine/threonine-protein kinase ndrC (1335 aa).

Disordered regions lie at residues 1 to 70, 85 to 158, 276 to 447, and 462 to 603; these read MSRK…KKGS, VDTH…LIPS, LPPP…SPLN, and TTTT…NNNK. Residues 8 to 17 are compositionally biased toward polar residues; it reads NRSSSSNSIE. The span at 27–41 shows a compositional bias: low complexity; that stretch reads SNISNSSNINCNNSS. Basic residues predominate over residues 55-70; the sequence is RSKHSSPIHSLKKKGS. A compositionally biased stretch (low complexity) spans 89 to 117; the sequence is SSSNSNNNSSSNNNNNNNNHNINSSSESS. The segment covering 118 to 132 has biased composition (polar residues); it reads TPTTPRSSFTPQVTM. The span at 133-153 shows a compositional bias: low complexity; sequence NSNQSSGNNSPQLSSRSSSQS. Over residues 276–288 the composition is skewed to pro residues; the sequence is LPPPSQQQLPPPQ. Low complexity-rich tracts occupy residues 289–331, 345–368, 382–396, 412–424, 437–447, and 462–484; these read SHQQ…TPQS, NQQQ…SPNK, SPSP…SPSS, PTPL…SPSS, PSSFSGGSPLN, and TTTT…TTIS. Residues 485–497 are compositionally biased toward polar residues; sequence NPNYTQNLPTTPL. The span at 498-507 shows a compositional bias: low complexity; sequence SNSSSNNNNN. Positions 508–528 are enriched in polar residues; that stretch reads GSFITLQDTTNNKSIINNNRE. Residues 540-566 are compositionally biased toward low complexity; sequence SSGSSNTTSSTTNTTTPSSSSLTTSSG. The span at 567–581 shows a compositional bias: basic and acidic residues; the sequence is KESRDRDSKDKEKDL. The segment covering 586 to 602 has biased composition (low complexity); it reads NNNNNNNNNNNNNNNNN. Positions 586–613 form a coiled coil; that stretch reads NNNNNNNNNNNNNNNNNKVEKEKENYCK. Positions 718-1019 constitute a Protein kinase domain; sequence FKILTQIGKG…KQDFKNHPFF (302 aa). ATP-binding positions include 724 to 732 and lysine 747; that span reads IGKGGFGQV. Aspartate 840 serves as the catalytic Proton acceptor. The AGC-kinase C-terminal domain occupies 1020–1106; sequence KNHNWDEIVN…RKSSALSLSM (87 aa). Residues 1239–1284 show a composition bias toward low complexity; that stretch reads SQSQPSLANQLQSSSSSPSPSLQSQSQSPSLQSSSKSTPNLSSSLL. The disordered stretch occupies residues 1239 to 1313; that stretch reads SQSQPSLANQ…IKKENESEEI (75 aa). The span at 1287-1313 shows a compositional bias: basic and acidic residues; the sequence is PVKEELEYKNQTENEVEIKKENESEEI. Residues 1289-1325 adopt a coiled-coil conformation; that stretch reads KEELEYKNQTENEVEIKKENESEEIQSLRDQLKEIII.

Belongs to the protein kinase superfamily. AGC Ser/Thr protein kinase family.

The enzyme catalyses L-seryl-[protein] + ATP = O-phospho-L-seryl-[protein] + ADP + H(+). The catalysed reaction is L-threonyl-[protein] + ATP = O-phospho-L-threonyl-[protein] + ADP + H(+). The protein is Probable serine/threonine-protein kinase ndrC (ndrC) of Dictyostelium discoideum (Social amoeba).